Reading from the N-terminus, the 492-residue chain is Lysine--tRNA ligase (492 aa).

Positions 395 and 402 each coordinate Mg(2+).

Belongs to the class-II aminoacyl-tRNA synthetase family. In terms of assembly, homodimer. Mg(2+) serves as cofactor.

The protein resides in the cytoplasm. It catalyses the reaction tRNA(Lys) + L-lysine + ATP = L-lysyl-tRNA(Lys) + AMP + diphosphate. The polypeptide is Lysine--tRNA ligase (Thermus thermophilus (strain ATCC BAA-163 / DSM 7039 / HB27)).